Consider the following 318-residue polypeptide: Galactinol synthase 1 (318 aa).

Lysine 102 is an active-site residue. Aspartate 118, aspartate 120, and histidine 244 together coordinate Mn(2+).

Belongs to the glycosyltransferase 8 family. Galactosyltransferase subfamily. It depends on a divalent metal cation as a cofactor. In terms of tissue distribution, expressed in seeds, mostly in radicle tips.

It localises to the cytoplasm. It carries out the reaction myo-inositol + UDP-alpha-D-galactose = alpha-D-galactosyl-(1-&gt;3)-1D-myo-inositol + UDP + H(+). Functionally, galactinol synthase involved in the biosynthesis of raffinose family oligosaccharides (RFOs) that function as osmoprotectants. May promote plant stress tolerance. This Solanum lycopersicum (Tomato) protein is Galactinol synthase 1 (GOLS1).